The sequence spans 135 residues: Aspartate 1-decarboxylase (135 aa).

Ser-25 acts as the Schiff-base intermediate with substrate; via pyruvic acid in catalysis. The residue at position 25 (Ser-25) is a Pyruvic acid (Ser). Position 57 (Thr-57) interacts with substrate. Catalysis depends on Tyr-58, which acts as the Proton donor. Residue Gly-73–Ala-75 participates in substrate binding.

The protein belongs to the PanD family. In terms of assembly, heterooctamer of four alpha and four beta subunits. Pyruvate serves as cofactor. Is synthesized initially as an inactive proenzyme, which is activated by self-cleavage at a specific serine bond to produce a beta-subunit with a hydroxyl group at its C-terminus and an alpha-subunit with a pyruvoyl group at its N-terminus.

It localises to the cytoplasm. It catalyses the reaction L-aspartate + H(+) = beta-alanine + CO2. The protein operates within cofactor biosynthesis; (R)-pantothenate biosynthesis; beta-alanine from L-aspartate: step 1/1. Its function is as follows. Catalyzes the pyruvoyl-dependent decarboxylation of aspartate to produce beta-alanine. The polypeptide is Aspartate 1-decarboxylase (Albidiferax ferrireducens (strain ATCC BAA-621 / DSM 15236 / T118) (Rhodoferax ferrireducens)).